A 354-amino-acid polypeptide reads, in one-letter code: Methylthioribose-1-phosphate isomerase (354 aa).

Substrate contacts are provided by residues 58 to 60 (RGA), R101, and Q204. Catalysis depends on D245, which acts as the Proton donor. Position 255–256 (255–256 (NK)) interacts with substrate.

It belongs to the eIF-2B alpha/beta/delta subunits family. MtnA subfamily.

It carries out the reaction 5-(methylsulfanyl)-alpha-D-ribose 1-phosphate = 5-(methylsulfanyl)-D-ribulose 1-phosphate. Its pathway is amino-acid biosynthesis; L-methionine biosynthesis via salvage pathway; L-methionine from S-methyl-5-thio-alpha-D-ribose 1-phosphate: step 1/6. In terms of biological role, catalyzes the interconversion of methylthioribose-1-phosphate (MTR-1-P) into methylthioribulose-1-phosphate (MTRu-1-P). The protein is Methylthioribose-1-phosphate isomerase of Xylella fastidiosa (strain 9a5c).